A 154-amino-acid chain; its full sequence is Protein X (154 aa).

The tract at residues 68 to 117 (PCALRFTSARRMETTVNAHQILPKVLHKRTLGLPAMSTTDLEAYFKDCVF) is mitochondrial targeting sequence.

Belongs to the orthohepadnavirus protein X family. In terms of assembly, may form homodimer. May interact with host CEBPA, CFLAR, CREB1, DDB1, E4F1, HBXIP, HSPD1/HSP60, NFKBIA, POLR2E and SMAD4. Interacts with host SMC5-SMC6 complex and induces its degradation. Interacts with host TRPC4AP; leading to prevent ubiquitination of TRPC4AP. Interacts with host PLSCR1; this interaction promotes ubiquitination and degradation of HBx and impairs HBx-mediated cell proliferation. A fraction may be phosphorylated in insect cells and HepG2 cells, a human hepatoblastoma cell line. Phosphorylated in vitro by host protein kinase C or mitogen-activated protein kinase. N-acetylated in insect cells.

It localises to the host cytoplasm. Its subcellular location is the host nucleus. The protein localises to the host mitochondrion. Functionally, multifunctional protein that plays a role in silencing host antiviral defenses and promoting viral transcription. Does not seem to be essential for HBV infection. May be directly involved in development of cirrhosis and liver cancer (hepatocellular carcinoma). Most of cytosolic activities involve modulation of cytosolic calcium. The effect on apoptosis is controversial depending on the cell types in which the studies have been conducted. May induce apoptosis by localizing in mitochondria and causing loss of mitochondrial membrane potential. May also modulate apoptosis by binding host CFLAR, a key regulator of the death-inducing signaling complex (DISC). Promotes viral transcription by using the host E3 ubiquitin ligase DDB1 to target the SMC5-SMC6 complex to proteasomal degradation. This host complex would otherwise bind to viral episomal DNA, and prevents its transcription. Moderately stimulates transcription of many different viral and cellular transcription elements. Promoters and enhancers stimulated by HBx contain DNA binding sites for NF-kappa-B, AP-1, AP-2, c-EBP, ATF/CREB, or the calcium-activated factor NF-AT. This chain is Protein X, found in Homo sapiens (Human).